The primary structure comprises 258 residues: Type II restriction enzyme HincII (258 aa).

The catalysed reaction is Endonucleolytic cleavage of DNA to give specific double-stranded fragments with terminal 5'-phosphates.. In terms of biological role, a P subtype restriction enzyme that recognizes the double-stranded sequence 5'-GTYRAC-3' and cleaves after Y-3. This chain is Type II restriction enzyme HincII (hincIIR), found in Haemophilus influenzae.